The chain runs to 376 residues: Beta-centractin (376 aa).

Met1 carries the N-acetylmethionine modification. The residue at position 4 (Tyr4) is a 3'-nitrotyrosine.

This sequence belongs to the actin family. ARP1 subfamily.

Its subcellular location is the cytoplasm. The protein localises to the cytoskeleton. It is found in the microtubule organizing center. The protein resides in the centrosome. Component of a multi-subunit complex involved in microtubule based vesicle motility. It is associated with the centrosome. This Mus musculus (Mouse) protein is Beta-centractin (Actr1b).